Here is a 145-residue protein sequence, read N- to C-terminus: MRRLRHREVRGPVLGHTATGGPQNGTSGCTTAPQQRPPPGTQGMLEQYLNRGGQKSHGLCWLLCFVSQGQNQDVISAELWCRIHVQAHWGCWQNSAVWGCRNEVLVSLLAVGQGLPSASGGRLPSLVHGPSHPDSQHPREVPLAL.

2 disordered regions span residues 1-41 (MRRL…PPGT) and 122-145 (RLPSLVHGPSHPDSQHPREVPLAL). The segment covering 20–34 (GGPQNGTSGCTTAPQ) has biased composition (polar residues). A compositionally biased stretch (basic and acidic residues) spans 134 to 145 (DSQHPREVPLAL).

As to expression, ubiquitous.

This is an uncharacterized protein from Homo sapiens (Human).